We begin with the raw amino-acid sequence, 991 residues long: UvrABC system protein A (991 aa).

Residue 48-55 (GLSGSGKS) coordinates ATP. ABC transporter domains are found at residues 345-624 (WAKS…PKSL) and 644-972 (NHRR…KFLE). An ATP-binding site is contributed by 676–683 (GVSGGGKS). Residues 775 to 801 (CEACQGDGVIKIEMHFLPDVYVTCDVC) form a C4-type zinc finger.

This sequence belongs to the ABC transporter superfamily. UvrA family. Forms a heterotetramer with UvrB during the search for lesions.

It localises to the cytoplasm. The UvrABC repair system catalyzes the recognition and processing of DNA lesions. UvrA is an ATPase and a DNA-binding protein. A damage recognition complex composed of 2 UvrA and 2 UvrB subunits scans DNA for abnormalities. When the presence of a lesion has been verified by UvrB, the UvrA molecules dissociate. This chain is UvrABC system protein A, found in Bradyrhizobium diazoefficiens (strain JCM 10833 / BCRC 13528 / IAM 13628 / NBRC 14792 / USDA 110).